Reading from the N-terminus, the 61-residue chain is Photosystem II reaction center protein K (61 aa).

Positions 1–24 are excised as a propeptide; the sequence is MLNIFCLICICLNSTLYSSSFFFA. The helical transmembrane segment at 32 to 52 threads the bilayer; that stretch reads FFNPIIDVMPIIPVLFFLLAF.

This sequence belongs to the PsbK family. In terms of assembly, PSII is composed of 1 copy each of membrane proteins PsbA, PsbB, PsbC, PsbD, PsbE, PsbF, PsbH, PsbI, PsbJ, PsbK, PsbL, PsbM, PsbT, PsbX, PsbY, PsbZ, Psb30/Ycf12, at least 3 peripheral proteins of the oxygen-evolving complex and a large number of cofactors. It forms dimeric complexes.

The protein resides in the plastid. Its subcellular location is the chloroplast thylakoid membrane. In terms of biological role, one of the components of the core complex of photosystem II (PSII). PSII is a light-driven water:plastoquinone oxidoreductase that uses light energy to abstract electrons from H(2)O, generating O(2) and a proton gradient subsequently used for ATP formation. It consists of a core antenna complex that captures photons, and an electron transfer chain that converts photonic excitation into a charge separation. The polypeptide is Photosystem II reaction center protein K (Phalaenopsis aphrodite subsp. formosana (Moth orchid)).